Reading from the N-terminus, the 752-residue chain is Glutamate carboxypeptidase 2 (752 aa).

The Cytoplasmic segment spans residues 1 to 22 (MWNALQDRDSAEVLGHRQRWLR). Residue serine 10 is modified to Phosphoserine. The helical; Signal-anchor for type II membrane protein transmembrane segment at 23 to 44 (VGTLVLALTGTFLIGFLFGWFI) threads the bilayer. At 45–752 (KPSNEATGNV…AAAETLREVA (708 aa)) the chain is on the extracellular side. N-linked (GlcNAc...) asparagine glycans are attached at residues asparagine 78, asparagine 123, and asparagine 155. Substrate-binding residues include arginine 212 and asparagine 259. Residues threonine 271 and tyrosine 274 each contribute to the Ca(2+) site. Residues 276-589 (ANEHAYRHEL…QVRGAMVFEL (314 aa)) are NAALADase. The N-linked (GlcNAc...) asparagine glycan is linked to asparagine 338. Residues histidine 379 and aspartate 389 each coordinate Zn(2+). Glutamate 426 is a binding site for substrate. The active-site Nucleophile; for NAALADase activity is glutamate 426. Residue glutamate 427 participates in Zn(2+) binding. Ca(2+) contacts are provided by glutamate 435 and glutamate 438. Aspartate 455 serves as a coordination point for Zn(2+). N-linked (GlcNAc...) asparagine glycosylation is found at asparagine 461 and asparagine 478. Substrate-binding positions include 519–520 (SG), asparagine 521, 536–538 (RAR), tyrosine 554, and 554–555 (YH). Histidine 555 provides a ligand contact to Zn(2+). N-linked (GlcNAc...) asparagine glycosylation is present at asparagine 615. The Charge relay system role is filled by serine 630. Asparagine 640 is a glycosylation site (N-linked (GlcNAc...) asparagine). Catalysis depends on charge relay system residues aspartate 668 and histidine 691. 701–702 (KY) provides a ligand contact to substrate. N-linked (GlcNAc...) asparagine glycosylation occurs at asparagine 722.

This sequence belongs to the peptidase M28 family. M28B subfamily. As to quaternary structure, homodimer. Zn(2+) is required as a cofactor. Expressed predominantly in the hippocampal region of the brain and in kidney. Lower levels in the ovary, testis and mandibular gland.

The protein localises to the cell membrane. It carries out the reaction Release of an unsubstituted, C-terminal glutamyl residue, typically from Ac-Asp-Glu or folylpoly-gamma-glutamates.. Its activity is regulated as follows. The NAALADase and folate hydrolase activities are inhibited by quisqualic acid. Functionally, has both folate hydrolase and N-acetylated-alpha-linked-acidic dipeptidase (NAALADase) activity. Has a preference for tri-alpha-glutamate peptides. In the intestine, required for the uptake of folate. In the brain, modulates excitatory neurotransmission through the hydrolysis of the neuropeptide, N-aceylaspartylglutamate (NAAG), thereby releasing glutamate. In terms of biological role, also exhibits a dipeptidyl-peptidase IV type activity. In vitro, cleaves Gly-Pro-AMC. This is Glutamate carboxypeptidase 2 (Folh1) from Mus musculus (Mouse).